The following is a 68-amino-acid chain: Large ribosomal subunit protein bL35 (68 aa).

Belongs to the bacterial ribosomal protein bL35 family.

This Onion yellows phytoplasma (strain OY-M) protein is Large ribosomal subunit protein bL35.